The primary structure comprises 577 residues: Phosphoethanolamine transferase CptA (577 aa).

5 helical membrane-spanning segments follow: residues 17 to 37, 45 to 65, 69 to 89, 119 to 139, and 154 to 174; these read LGWALLYFWFFSTLLQAIIYL, GLRDSLLYSSLWLIPVFLFPG, VIAAVIGVVLWAASLAALSYY, YFSLKIVLVALAYTVAAILLW, and LVSFALLYGLILHPIAMNTFI.

Belongs to the phosphoethanolamine transferase family. EptC/CptA subfamily.

It localises to the cell inner membrane. The protein operates within bacterial outer membrane biogenesis; LPS core biosynthesis. Catalyzes the addition of a phosphoethanolamine moiety to the outer membrane lipopolysaccharide core. This is Phosphoethanolamine transferase CptA (cptA) from Salmonella typhimurium (strain LT2 / SGSC1412 / ATCC 700720).